The primary structure comprises 67 residues: MGQKTAVGSLLKSIGNSGQGKVVAGWGAVPVMAFVGVLLLVFLVILLQIYNQSLLLQGFSVDWNGVN.

The chain crosses the membrane as a helical span at residues 27–47 (GAVPVMAFVGVLLLVFLVILL).

This sequence belongs to the PsbH family. As to quaternary structure, PSII is composed of 1 copy each of membrane proteins PsbA, PsbB, PsbC, PsbD, PsbE, PsbF, PsbH, PsbI, PsbJ, PsbK, PsbL, PsbM, PsbT, PsbX, PsbY, Psb30/Ycf12, peripheral proteins PsbO, CyanoQ (PsbQ), PsbU, PsbV and a large number of cofactors. It forms dimeric complexes.

It is found in the cellular thylakoid membrane. Functionally, one of the components of the core complex of photosystem II (PSII), required for its stability and/or assembly. PSII is a light-driven water:plastoquinone oxidoreductase that uses light energy to abstract electrons from H(2)O, generating O(2) and a proton gradient subsequently used for ATP formation. It consists of a core antenna complex that captures photons, and an electron transfer chain that converts photonic excitation into a charge separation. This Prochlorococcus marinus (strain SARG / CCMP1375 / SS120) protein is Photosystem II reaction center protein H.